The chain runs to 965 residues: MAKGFYISKALGILAILLGVAAVATIIALSVVYAQEKNKNAERGTAAPTSPTGPTTTSATTLDQSKPWNRYRLPTTLLPDSYRVTLRPYLTPNNNGLYIFTGSSTVRFTCKEPTDVIIIHSKKLNYTQHSGHLAALKGVGDTQAPEIDRTELVLLTEYLVVHLKSSLEAGKTYEMETTFQGELADDLAGFYRSEYMDGNVKKVLATTQMQSTDARKSFPCFDEPAMKATFNITLIHPKDLTALSNMPPKGPSVPFDGDSNWSVTEFETTPVMSTYLLAYIVSEFTSVESVAPNDVQIRIWARPKATADNHGLYALNVTGPILNFFANHYNTAYPLPKSDQIALPDFNAGAMENWGLVTYRENALLYDPQSSSSSNKERVVTVIAHELAHQWFGNLVTLAWWNDLWLNEGFASYVEYLGADYAEPTWNLKDLMVPNDVYSVMAVDALVTSHPLTTPANEVNTPAQISEMFDTISYSKGASVIRMLSNFLTEDLFKKGLASYLQTFAYQNTTYLNLWEHLQMAVENQLSIRLPDTVSAIMDRWTLQMGFPVITVDTNTGTISQKHFLLDPNSTVTRPSQFNYLWIVPISSIRNGQPQEHYWLRGEERNQNELFKAAADDWVLLNINVTGYYQVNYDENNWKKIQNQLMSRRENIPVINRAQVIYDSFNLASAHMVPVTLALNNTLFLKNEMEYMPWQAAVSSLNYFKLMFDRTEVYGPMQNYLKNQVEPIFLYFENLTKNWTEIPENLMDQYSEINAISTACSNGLPKCEELAKTLFNQWMNNPNVNPIDPNLRSTIYCNAIAQGGQEEWDFAWNQLQQAELVNEADKLRSALACTNHVWLLNRYLSYTLNPDLIRKQDATSTITSIASNVIGQSLAWDFIRSNWKKLFEDYGGGSFSFSNLIQGVTRRFSTEFELQQLEEFKENNMDVGFGSGTRALEQALEKTKANINWVKENKEVVLNWFKDHS.

Topologically, residues 1–8 (MAKGFYIS) are cytoplasmic. A helical; Signal-anchor for type II membrane protein membrane pass occupies residues 9 to 32 (KALGILAILLGVAAVATIIALSVV). The tract at residues 33 to 65 (YAQEKNKNAERGTAAPTSPTGPTTTSATTLDQS) is cytosolic Ser/Thr-rich junction. At 33–965 (YAQEKNKNAE…VVLNWFKDHS (933 aa)) the chain is on the extracellular side. The disordered stretch occupies residues 40-65 (NAERGTAAPTSPTGPTTTSATTLDQS). Over residues 44–61 (GTAAPTSPTGPTTTSATT) the composition is skewed to low complexity. The tract at residues 66–965 (KPWNRYRLPT…VVLNWFKDHS (900 aa)) is metalloprotease. N-linked (GlcNAc...) asparagine glycosylation is present at Asn-125. Residue Tyr-173 is modified to Sulfotyrosine. N-linked (GlcNAc...) asparagine glycans are attached at residues Asn-231, Asn-260, and Asn-316. 349-353 (GAMEN) provides a ligand contact to substrate. A Zn(2+)-binding site is contributed by His-385. The active-site Proton acceptor is the Glu-386. Residues His-389 and Glu-408 each contribute to the Zn(2+) site. The residue at position 416 (Tyr-416) is a Sulfotyrosine. 6 N-linked (GlcNAc...) asparagine glycosylation sites follow: Asn-508, Asn-569, Asn-624, Asn-680, Asn-734, and Asn-738. 2 disulfide bridges follow: Cys-760–Cys-767 and Cys-797–Cys-833.

It belongs to the peptidase M1 family. As to quaternary structure, homodimer. Interacts with SLC6A19. Zn(2+) is required as a cofactor. Sulfated. Post-translationally, N- and O-glycosylated. In terms of processing, may undergo proteolysis and give rise to a soluble form.

It is found in the cell membrane. The enzyme catalyses Release of an N-terminal amino acid, Xaa-|-Yaa- from a peptide, amide or arylamide. Xaa is preferably Ala, but may be most amino acids including Pro (slow action). When a terminal hydrophobic residue is followed by a prolyl residue, the two may be released as an intact Xaa-Pro dipeptide.. Its function is as follows. Broad specificity aminopeptidase which plays a role in the final digestion of peptides generated from hydrolysis of proteins by gastric and pancreatic proteases. Also involved in the processing of various peptides including peptide hormones, such as angiotensin III and IV, neuropeptides, and chemokines. May also be involved the cleavage of peptides bound to major histocompatibility complex class II molecules of antigen presenting cells. May have a role in angiogenesis and promote cholesterol crystallization. May have a role in amino acid transport by acting as binding partner of amino acid transporter SLC6A19 and regulating its activity. This Bos taurus (Bovine) protein is Aminopeptidase N (ANPEP).